Reading from the N-terminus, the 192-residue chain is Orotate phosphoribosyltransferase (192 aa).

116 to 124 (EDIVTTGLS) lines the 5-phospho-alpha-D-ribose 1-diphosphate pocket. Residues T120 and R148 each coordinate orotate.

It belongs to the purine/pyrimidine phosphoribosyltransferase family. PyrE subfamily. As to quaternary structure, homodimer. It depends on Mg(2+) as a cofactor.

It catalyses the reaction orotidine 5'-phosphate + diphosphate = orotate + 5-phospho-alpha-D-ribose 1-diphosphate. It functions in the pathway pyrimidine metabolism; UMP biosynthesis via de novo pathway; UMP from orotate: step 1/2. In terms of biological role, catalyzes the transfer of a ribosyl phosphate group from 5-phosphoribose 1-diphosphate to orotate, leading to the formation of orotidine monophosphate (OMP). The sequence is that of Orotate phosphoribosyltransferase from Bartonella tribocorum (strain CIP 105476 / IBS 506).